Consider the following 267-residue polypeptide: Small ribosomal subunit protein uS2 (267 aa).

The segment at 224–244 is disordered; it reads GRQGEDEDVTEDSFKDNKDAK. The span at 235-244 shows a compositional bias: basic and acidic residues; that stretch reads DSFKDNKDAK.

Belongs to the universal ribosomal protein uS2 family.

This chain is Small ribosomal subunit protein uS2, found in Lactiplantibacillus plantarum (strain ATCC BAA-793 / NCIMB 8826 / WCFS1) (Lactobacillus plantarum).